A 718-amino-acid chain; its full sequence is MALALSVAPTSSSLSSLLSRTPNPSPNFRTTHLNFGSQRRIYTINPLLRSFKCLQSSSRDVNASPFSISAIASSSSSSQTTELVPYKLQRLVKEFKSLTEPIDRLKWVLHYASLLPQMPESSKTESNRVMGCTARVWLDAELGQDGKMRFCADSDSDVSKGMCSCLIQVLDEASPVEVMELKTEDLAELNVGLLGGERSRVNTWYNVLVSMQKKTRRLVAEREGKVPSFEPFPSLVLTAHGIEAKGSFAQAQAKYLFPEESRVEELVNVLKEKKIGVVAHFYMDPEVQGVLTAAQKHWPHISISDSLVMADSAVTMAKAGCQFITVLGVDFMSENVRAILDQAGFEKVGVYRMSDETIGCSLADAASAPAYLNYLEAASRSPPSLHVVYINTSLETKAFAHELVPTITCTSSNVVQTILQAFAQMPELTVWYGPDSYMGANIVKLFQQMTLMTNEEIANIHPKHSLDSIKSLLPRLHYFQEGTCIVHHLFGHEVVERIKYMYCDAFLTAHLEVPGEMFSLAMEAKKREMGVVGSTQNILDFIKQKVQEAVDRNVDDHLQFVLGTESGMVTSIVAVIRSLLGSSANSKLKVEVVFPVSSDSMTKTSSDSSNSIKVGDVALPVVPGVAGGEGCSIHGGCASCPYMKMNSLSSLLKVCHKLPDLENVYGGFIAERFKRQTPQGKLIADVGCEPILHMRHFQANKELPDKLVHQVLSCESKR.

Positions 1–22 (MALALSVAPTSSSLSSLLSRTP) are enriched in low complexity. Residues 1-29 (MALALSVAPTSSSLSSLLSRTPNPSPNFR) form a disordered region. The transit peptide at 1 to 70 (MALALSVAPT…VNASPFSISA (70 aa)) directs the protein to the chloroplast. Cys-132 functions as the Cysteine persulfide intermediate in the catalytic mechanism. Iminosuccinate is bound by residues His-280 and Ser-306. Cys-360 contacts [4Fe-4S] cluster. Iminosuccinate is bound by residues 389–391 (YIN) and Ser-411. A [4Fe-4S] cluster-binding site is contributed by Cys-484. Residues 510 to 512 (HLE) and Thr-535 contribute to the iminosuccinate site. Residue Cys-640 coordinates [4Fe-4S] cluster.

This sequence belongs to the quinolinate synthase family. Type 1 subfamily. As to quaternary structure, homodimer. Interacts in vitro with NFS2, CpNIFS3 and AO. Part of a Cys defulfurase complex. [4Fe-4S] cluster serves as cofactor. As to expression, expressed in roots, leaves, stems and flowers.

It is found in the plastid. Its subcellular location is the chloroplast. The catalysed reaction is iminosuccinate + dihydroxyacetone phosphate = quinolinate + phosphate + 2 H2O + H(+). It participates in cofactor biosynthesis; NAD(+) biosynthesis; quinolinate from iminoaspartate: step 1/1. Its function is as follows. Catalyzes the condensation of iminoaspartate with dihydroxyacetone phosphate to form quinolinate. Can complement nadA-deficient E.coli mutant. Essential for the de novo synthesis of NAD. Also participates in cysteine desulfurization mediated by NFS2. Can activate the cysteine desulfurase activity of NFS2 in vitro. In Arabidopsis thaliana (Mouse-ear cress), this protein is Quinolinate synthase, chloroplastic.